The following is a 297-amino-acid chain: Hydroxysqualene synthase (297 aa).

It belongs to the phytoene/squalene synthase family. HpnC subfamily.

The catalysed reaction is presqualene diphosphate + H2O = hydroxysqualene + diphosphate. Its pathway is secondary metabolite biosynthesis; hopanoid biosynthesis. Functionally, involved in the biosynthesis of the hopanoid precursor squalene (SQ) from farnesyl diphosphate (FPP). Catalyzes the second step, the conversion of presqualene diphosphate (PSPP) to hydroxysqualene (HSQ). This is Hydroxysqualene synthase from Zymomonas mobilis subsp. mobilis (strain ATCC 31821 / ZM4 / CP4).